Reading from the N-terminus, the 150-residue chain is Phosphoribosyl-AMP cyclohydrolase (150 aa).

Mg(2+) is bound at residue aspartate 92. Cysteine 93 is a Zn(2+) binding site. Residues aspartate 94 and aspartate 96 each coordinate Mg(2+). Positions 111 and 118 each coordinate Zn(2+).

The protein belongs to the PRA-CH family. Homodimer. The cofactor is Mg(2+). Zn(2+) serves as cofactor.

It is found in the cytoplasm. It carries out the reaction 1-(5-phospho-beta-D-ribosyl)-5'-AMP + H2O = 1-(5-phospho-beta-D-ribosyl)-5-[(5-phospho-beta-D-ribosylamino)methylideneamino]imidazole-4-carboxamide. It participates in amino-acid biosynthesis; L-histidine biosynthesis; L-histidine from 5-phospho-alpha-D-ribose 1-diphosphate: step 3/9. Functionally, catalyzes the hydrolysis of the adenine ring of phosphoribosyl-AMP. The polypeptide is Phosphoribosyl-AMP cyclohydrolase (Agrobacterium fabrum (strain C58 / ATCC 33970) (Agrobacterium tumefaciens (strain C58))).